Here is a 382-residue protein sequence, read N- to C-terminus: MKAVHFGAGNIGRGFVGLLLHEAGYEVVFADVADALISQLASASSYDVHEVGENPAVKTVSGFRAFNSASQEAAVVEEISTADVLTTAVGPHILKFVAPVIARGLAVRPADLPPLQVMACENAINATDLLHTEIRAAWDDSAGDLDAVAVFANTAVDRIVPNQAPGQGLDVTVETFYEWVIDRTPFGGNAPKIPGATFVDELGPYIERKLFTVNTGHASAAYFGYAAGLEKISDAMADPAVAAKVRAVLEETKELLVAKHGFEEAEQEAYVQKILSRFTNPHLPDTVNRVGRAPLRKLSRHERFVGPAAELAERGVTPAALLEAMSAALRFDDGNDDEAVELTNLLSELDAAAAVERITELTPTHPLFPALQKLVEDRQAEA.

NAD(+) is bound at residue 3-14 (AVHFGAGNIGRG).

Belongs to the mannitol dehydrogenase family.

The enzyme catalyses D-mannitol 1-phosphate + NAD(+) = beta-D-fructose 6-phosphate + NADH + H(+). The chain is Mannitol-1-phosphate 5-dehydrogenase from Paenarthrobacter aurescens (strain TC1).